Here is a 269-residue protein sequence, read N- to C-terminus: Indole-3-glycerol phosphate synthase 1 (269 aa).

This sequence belongs to the TrpC family.

The enzyme catalyses 1-(2-carboxyphenylamino)-1-deoxy-D-ribulose 5-phosphate + H(+) = (1S,2R)-1-C-(indol-3-yl)glycerol 3-phosphate + CO2 + H2O. It participates in amino-acid biosynthesis; L-tryptophan biosynthesis; L-tryptophan from chorismate: step 4/5. The protein is Indole-3-glycerol phosphate synthase 1 (trpC1) of Streptomyces coelicolor (strain ATCC BAA-471 / A3(2) / M145).